The following is a 570-amino-acid chain: Putative diflavin flavoprotein A 6 (570 aa).

The zinc metallo-hydrolase stretch occupies residues 38-231 (AKGTTANSYL…FPTRLYATGH (194 aa)). A Flavodoxin-like domain is found at 260–402 (VALIYASAYG…AGTDFAQALK (143 aa)). The interval 421–570 (VGRIVGSLCV…VHHRKSGNHY (150 aa)) is flavodoxin-reductase-like.

The protein in the N-terminal section; belongs to the zinc metallo-hydrolase group 3 family. In the C-terminal section; belongs to the flavodoxin reductase family. It depends on Fe cation as a cofactor.

Functionally, mediates electron transfer from NADH to oxygen, reducing it to water. This modular protein has 3 redox cofactors, in other organisms the same activity requires 2 or 3 proteins. The protein is Putative diflavin flavoprotein A 6 (dfa6) of Nostoc sp. (strain PCC 7120 / SAG 25.82 / UTEX 2576).